The following is a 154-amino-acid chain: AP-1 complex subunit sigma-2 (154 aa).

Belongs to the adaptor complexes small subunit family. As to quaternary structure, adaptor protein complex 1 (AP-1) is a heterotetramer composed of two large adaptins (gamma-type subunit and beta-type subunit), a medium adaptin (mu-type subunit) and a small adaptin (sigma-type subunit).

It localises to the golgi apparatus. The protein localises to the trans-Golgi network. It is found in the cytoplasmic vesicle. The protein resides in the clathrin-coated vesicle membrane. In terms of biological role, subunit of clathrin-associated adaptor protein complex 1 that plays a role in protein sorting in the trans-Golgi network (TGN) and endosomes. The AP complexes mediate the recruitment of clathrin to membranes and the recognition of sorting signals within the cytosolic tails of transmembrane cargo molecules. Also involved in early steps of phagocytosis and macropinocytosis. The chain is AP-1 complex subunit sigma-2 (ap1s2) from Dictyostelium discoideum (Social amoeba).